The chain runs to 53 residues: Large ribosomal subunit protein bL32 (53 aa).

Basic residues predominate over residues 1-20 (MAVPKRRVSHTRAAKRRTHY). A disordered region spans residues 1-53 (MAVPKRRVSHTRAAKRRTHYKLTLPMPVKDADGTWRMPHHMNMTTGEYKTTKA). Residues 42–53 (NMTTGEYKTTKA) are compositionally biased toward polar residues.

The protein belongs to the bacterial ribosomal protein bL32 family.

The chain is Large ribosomal subunit protein bL32 from Sulfurovum sp. (strain NBC37-1).